Consider the following 269-residue polypeptide: Senescence-associated protein 13 (269 aa).

21 to 45 (LVTGGSKGIGEAVVEELAMLGAKVH) is an NADP(+) binding site. Serine 154 is a substrate binding site. Residue tyrosine 167 is the Proton acceptor of the active site.

It belongs to the short-chain dehydrogenases/reductases (SDR) family. SDR65C subfamily.

Functionally, unspecific reductase providing both diastereomeric alcohols from the prochiral ketones. Active on cyclic monoterpenes and small flexible lipophilic carbonyls. No activity with tropinone, nitrogen-containing tropinone analogs, tropine or pseudotropine as substrate. This Arabidopsis thaliana (Mouse-ear cress) protein is Senescence-associated protein 13.